The sequence spans 289 residues: B- and T-lymphocyte attenuator (289 aa).

An N-terminal signal peptide occupies residues Met-1–Gly-30. In terms of domain architecture, Ig-like V-type spans Lys-31–Tyr-132. The Extracellular segment spans residues Lys-31–Arg-157. Disulfide bonds link Cys-34/Cys-63, Cys-58/Cys-115, and Cys-72/Cys-79. N-linked (GlcNAc...) asparagine glycosylation is found at Asn-75, Asn-94, and Asn-110. The chain crosses the membrane as a helical span at residues Leu-158–Leu-178. At Arg-179–Ser-289 the chain is on the cytoplasmic side.

Interacts with tyrosine phosphatases PTPN6/SHP-1 and PTPN11/SHP-2. Interacts with TNFRSF14/HVEM (via cysteine-rich domain 1). In terms of processing, phosphorylated on Tyr residues by TNFRSF14 and by antigen receptors cross-linking, both inducing association with PTPN6 and PTPN11. N-glycosylated.

Its subcellular location is the cell membrane. Its function is as follows. Inhibitory receptor on lymphocytes that negatively regulates antigen receptor signaling via PTPN6/SHP-1 and PTPN11/SHP-2. May interact in cis (on the same cell) or in trans (on other cells) with TNFRSF14. In cis interactions, appears to play an immune regulatory role inhibiting in trans interactions in naive T cells to maintain a resting state. In trans interactions, can predominate during adaptive immune response to provide survival signals to effector T cells. The sequence is that of B- and T-lymphocyte attenuator from Homo sapiens (Human).